A 135-amino-acid chain; its full sequence is D-ribose pyranase (135 aa).

Catalysis depends on histidine 20, which acts as the Proton donor. Residues aspartate 28, histidine 102, and 124–126 contribute to the substrate site; that span reads YAN.

The protein belongs to the RbsD / FucU family. RbsD subfamily. In terms of assembly, homodecamer.

Its subcellular location is the cytoplasm. The catalysed reaction is beta-D-ribopyranose = beta-D-ribofuranose. The protein operates within carbohydrate metabolism; D-ribose degradation; D-ribose 5-phosphate from beta-D-ribopyranose: step 1/2. In terms of biological role, catalyzes the interconversion of beta-pyran and beta-furan forms of D-ribose. This chain is D-ribose pyranase, found in Rhodopirellula baltica (strain DSM 10527 / NCIMB 13988 / SH1).